The chain runs to 640 residues: Threonine--tRNA ligase (640 aa).

One can recognise a TGS domain in the interval 1 to 61 (MPTITLPDGS…ENDASLQIIT (61 aa)). A catalytic region spans residues 242-533 (DHRKIGKRLG…LIEHYEGAFP (292 aa)). Zn(2+) is bound by residues Cys333, His384, and His510.

Belongs to the class-II aminoacyl-tRNA synthetase family. As to quaternary structure, homodimer. It depends on Zn(2+) as a cofactor.

Its subcellular location is the cytoplasm. It catalyses the reaction tRNA(Thr) + L-threonine + ATP = L-threonyl-tRNA(Thr) + AMP + diphosphate + H(+). Functionally, catalyzes the attachment of threonine to tRNA(Thr) in a two-step reaction: L-threonine is first activated by ATP to form Thr-AMP and then transferred to the acceptor end of tRNA(Thr). Also edits incorrectly charged L-seryl-tRNA(Thr). In Pseudomonas syringae pv. tomato (strain ATCC BAA-871 / DC3000), this protein is Threonine--tRNA ligase.